The primary structure comprises 510 residues: Glycerol kinase (510 aa).

Residue threonine 14 participates in ADP binding. Positions 14 and 15 each coordinate ATP. Residue threonine 14 coordinates sn-glycerol 3-phosphate. ADP is bound at residue arginine 18. The sn-glycerol 3-phosphate site is built by arginine 84, glutamate 85, tyrosine 136, and aspartate 256. Positions 84, 85, 136, 256, and 257 each coordinate glycerol. ADP-binding residues include threonine 278, glycine 322, glycine 422, and asparagine 426. Threonine 278, glycine 322, and glycine 422 together coordinate ATP.

Belongs to the FGGY kinase family.

It catalyses the reaction glycerol + ATP = sn-glycerol 3-phosphate + ADP + H(+). It participates in polyol metabolism; glycerol degradation via glycerol kinase pathway; sn-glycerol 3-phosphate from glycerol: step 1/1. Its function is as follows. Key enzyme in the regulation of glycerol uptake and metabolism. Catalyzes the phosphorylation of glycerol to yield sn-glycerol 3-phosphate. It also catalyzes the phosphorylation of dihydroxyacetone (DHA). Involved, together with the DHA kinase DhaKLM, in the metabolism of DHA. The chain is Glycerol kinase from Haloferax volcanii (strain ATCC 29605 / DSM 3757 / JCM 8879 / NBRC 14742 / NCIMB 2012 / VKM B-1768 / DS2) (Halobacterium volcanii).